We begin with the raw amino-acid sequence, 481 residues long: 3-isopropylmalate dehydratase large subunit (481 aa).

[4Fe-4S] cluster-binding residues include Cys357, Cys417, and Cys420. Over residues 429–441 (SPGQRCASTSNRN) the composition is skewed to polar residues. Positions 429–451 (SPGQRCASTSNRNFEGRQGKGGR) are disordered.

This sequence belongs to the aconitase/IPM isomerase family. LeuC type 1 subfamily. Heterodimer of LeuC and LeuD. The cofactor is [4Fe-4S] cluster.

It catalyses the reaction (2R,3S)-3-isopropylmalate = (2S)-2-isopropylmalate. It functions in the pathway amino-acid biosynthesis; L-leucine biosynthesis; L-leucine from 3-methyl-2-oxobutanoate: step 2/4. Functionally, catalyzes the isomerization between 2-isopropylmalate and 3-isopropylmalate, via the formation of 2-isopropylmaleate. The polypeptide is 3-isopropylmalate dehydratase large subunit (Mycobacterium sp. (strain JLS)).